The chain runs to 140 residues: ATP synthase epsilon chain (140 aa).

Belongs to the ATPase epsilon chain family. As to quaternary structure, F-type ATPases have 2 components, CF(1) - the catalytic core - and CF(0) - the membrane proton channel. CF(1) has five subunits: alpha(3), beta(3), gamma(1), delta(1), epsilon(1). CF(0) has three main subunits: a, b and c.

The protein resides in the cell inner membrane. In terms of biological role, produces ATP from ADP in the presence of a proton gradient across the membrane. In Laribacter hongkongensis (strain HLHK9), this protein is ATP synthase epsilon chain.